The following is a 208-amino-acid chain: Thymidylate kinase (208 aa).

13 to 20 (GLEGAGKS) serves as a coordination point for ATP.

It belongs to the thymidylate kinase family.

It carries out the reaction dTMP + ATP = dTDP + ADP. Phosphorylation of dTMP to form dTDP in both de novo and salvage pathways of dTTP synthesis. The sequence is that of Thymidylate kinase from Shewanella amazonensis (strain ATCC BAA-1098 / SB2B).